Reading from the N-terminus, the 22-residue chain is Phospholipase A2 (22 aa).

It belongs to the phospholipase A2 family. Ca(2+) is required as a cofactor.

It localises to the secreted. The catalysed reaction is a 1,2-diacyl-sn-glycero-3-phosphocholine + H2O = a 1-acyl-sn-glycero-3-phosphocholine + a fatty acid + H(+). Functionally, PA2 catalyzes the calcium-dependent hydrolysis of the 2-acyl groups in 3-sn-phosphoglycerides. The protein is Phospholipase A2 of Struthio camelus (Common ostrich).